The chain runs to 102 residues: Small ribosomal subunit protein uS10 (102 aa).

It belongs to the universal ribosomal protein uS10 family. As to quaternary structure, part of the 30S ribosomal subunit.

Its function is as follows. Involved in the binding of tRNA to the ribosomes. This chain is Small ribosomal subunit protein uS10, found in Heliobacterium modesticaldum (strain ATCC 51547 / Ice1).